The following is a 734-amino-acid chain: Ribosomal RNA large subunit methyltransferase K/L (734 aa).

Positions 49–167 constitute a THUMP domain; it reads QAYRVCMWSR…KTEHTYCLDL (119 aa).

Belongs to the methyltransferase superfamily. RlmKL family.

The protein localises to the cytoplasm. The enzyme catalyses guanosine(2445) in 23S rRNA + S-adenosyl-L-methionine = N(2)-methylguanosine(2445) in 23S rRNA + S-adenosyl-L-homocysteine + H(+). It catalyses the reaction guanosine(2069) in 23S rRNA + S-adenosyl-L-methionine = N(2)-methylguanosine(2069) in 23S rRNA + S-adenosyl-L-homocysteine + H(+). In terms of biological role, specifically methylates the guanine in position 2445 (m2G2445) and the guanine in position 2069 (m7G2069) of 23S rRNA. The polypeptide is Ribosomal RNA large subunit methyltransferase K/L (Acinetobacter baylyi (strain ATCC 33305 / BD413 / ADP1)).